Here is a 425-residue protein sequence, read N- to C-terminus: Putative TRAP transporter large permease protein HI_1029 (425 aa).

Helical transmembrane passes span 3-23 (VIIF…VAFA), 24-44 (LLIC…QILA), 54-74 (FSLM…EGGL), 93-113 (LGFV…SAVA), 139-159 (LIGT…FIVF), 169-189 (KLFL…AILW), 217-237 (VWAL…IFTP), 241-261 (GVVA…ELPL), 275-295 (TAVV…ITVA), 312-332 (PTIL…VMDL), 334-354 (PTVL…GIDP), 355-375 (VYFG…PPVG), and 399-419 (YLGM…LILM).

It belongs to the TRAP transporter large permease family.

It localises to the cell inner membrane. This Haemophilus influenzae (strain ATCC 51907 / DSM 11121 / KW20 / Rd) protein is Putative TRAP transporter large permease protein HI_1029.